Here is a 378-residue protein sequence, read N- to C-terminus: MNIWLSMLTTTGLGAIIGGFTNHLAIKMLFRPHRPMYIGKFQVPFTPGLIPKRRDELAVQLGKMVVEHLLTPEGIGKKLTNEEFQKGLIHWAQVEVDKVITNEQSLRHMLGKWDVAHVEKEATEKIEQVITEKIQAFLEEYYTYTWEQALPHSVHEKIENAIPNVSAFILKRAIHFFESEEGKSRLSKMIDDFFASRGALLNLVGMFLGNVSVVDRVQPEVIKFLGQDGTKQLLTDVLQKEWEKLKGRDVKELETFVEKEMIVSSILSAVKVEETVSKFLNQSVKQVCEPVRETIIEKVVPKAVTKGLKWGGENVESILNNLHLAEIVQQEVSTFSTERLEDLVLSITKNELKMITYLGALLGGMIGIVQGLLLLFLK.

2 helical membrane passes run 1–21 (MNIW…GGFT) and 357–377 (YLGA…LLFL).

It belongs to the UPF0754 family.

It localises to the cell membrane. This Bacillus cereus (strain ZK / E33L) protein is UPF0754 membrane protein BCE33L0760.